Here is a 199-residue protein sequence, read N- to C-terminus: Recombination protein RecR (199 aa).

The segment at 56–71 adopts a C4-type zinc-finger fold; it reads CQQCNNYTEQTLCALC. The Toprim domain occupies 79-174; it reads TLLCVVESPA…NISQLAHGIP (96 aa).

It belongs to the RecR family.

Functionally, may play a role in DNA repair. It seems to be involved in an RecBC-independent recombinational process of DNA repair. It may act with RecF and RecO. The polypeptide is Recombination protein RecR (Legionella pneumophila subsp. pneumophila (strain Philadelphia 1 / ATCC 33152 / DSM 7513)).